Here is a 329-residue protein sequence, read N- to C-terminus: Haptoglobin (329 aa).

N9 carries N-linked (GlcNAc...) asparagine glycosylation. A Sushi domain is found at 13-70 (VSLPKPPVIENGYVEHMIRYQCKPFYKLHTEGDGVYTLNSEKHWTNKAVGEKLPECEA). Cystine bridges form between C34/C68 and C72/C189. A propeptide is located at residue R84. The Peptidase S1 domain maps to 85–327 (IMGGSVDAKG…VLAWVQETIA (243 aa)). 2 N-linked (GlcNAc...) asparagine glycosylation sites follow: N107 and N214. Cystine bridges form between C232–C263 and C274–C304. The interaction with CD163 stretch occupies residues 241 to 246 (VPEKKS).

This sequence belongs to the peptidase S1 family. As to quaternary structure, tetramer of two alpha and two beta chains; disulfide-linked. The hemoglobin/haptoglobin complex is composed of a haptoglobin dimer bound to two hemoglobin alpha-beta dimers. Interacts with CD163. Interacts with ERGIC3. Expressed by the liver and secreted in plasma.

It is found in the secreted. The protein resides in the extracellular space. As a result of hemolysis, hemoglobin is found to accumulate in the kidney and is secreted in the urine. Haptoglobin captures, and combines with free plasma hemoglobin to allow hepatic recycling of heme iron and to prevent kidney damage. Haptoglobin also acts as an antioxidant, has antibacterial activity and plays a role in modulating many aspects of the acute phase response. Hemoglobin/haptoglobin complexes are rapidly cleared by the macrophage CD163 scavenger receptor expressed on the surface of liver Kupfer cells through an endocytic lysosomal degradation pathway. The chain is Haptoglobin (HP) from Canis lupus familiaris (Dog).